The sequence spans 544 residues: Thermosome subunit (544 aa).

It belongs to the TCP-1 chaperonin family. As to quaternary structure, forms an oligomeric complex of eight-membered rings.

In terms of biological role, molecular chaperone; binds unfolded polypeptides in vitro, and has a weak ATPase activity. The sequence is that of Thermosome subunit (ths) from Methanothermococcus thermolithotrophicus (Methanococcus thermolithotrophicus).